The following is a 327-amino-acid chain: Cyclic AMP-responsive element-binding protein 1 (327 aa).

Disordered stretches follow at residues 1 to 26 and 94 to 113; these read MTME…QQMT and SEDS…RREI. Positions 87 to 146 constitute a KID domain; that stretch reads QISTIAESEDSQESVDSVTDSQKRREILSRRPSYRKILNDLSSDAPGVPRIEEEKSEEET. A Phosphoserine; by CaMK1, CaMK2, CaMK4, PKB/AKT1 or PKB/AKT2, RPS6KA3, RPS6KA4, RPS6KA5, SGK1 and TSSK4 modification is found at Ser-119. Lys-122 is covalently cross-linked (Glycyl lysine isopeptide (Lys-Gly) (interchain with G-Cter in SUMO2)). A disordered region spans residues 125–148; that stretch reads NDLSSDAPGVPRIEEEKSEEETSA. Ser-128 is modified (phosphoserine). Ser-257 bears the Phosphoserine; by HIPK2 mark. Positions 269–327 constitute a bZIP domain; that stretch reads ARKREVRLMKNREAARECRRKKKEYVKCLENRVAVLENQNKTLIEELKALKDLYCHKSD. Residues 270–295 are basic motif; sequence RKREVRLMKNREAARECRRKKKEYVK. Glycyl lysine isopeptide (Lys-Gly) (interchain with G-Cter in SUMO1) cross-links involve residues Lys-271 and Lys-290. Positions 297–318 are leucine-zipper; it reads LENRVAVLENQNKTLIEELKAL.

This sequence belongs to the bZIP family. In terms of assembly, interacts with PPRC1. Binds DNA as a dimer. This dimer is stabilized by magnesium ions. Interacts, through the bZIP domain, with the coactivators CRTC1/TORC1, CRTC2/TORC2 and CRTC3/TORC3. When phosphorylated on Ser-119, binds CREBBP. Interacts with CREBL2; regulates CREB1 phosphorylation, stability and transcriptional activity. Interacts (phosphorylated form) with TOX3. Interacts with ARRB1. Binds to HIPK2. Interacts with SGK1. Interacts with TSSK4; this interaction facilitates phosphorylation on Ser-119. Forms a complex with KMT2A and CREBBP. Interacts with TOX4; CREB1 is required for full induction of TOX4-dependent activity and the interaction is increased by cAMP and inhibited by insulin. As to quaternary structure, (Microbial infection) Interacts with hepatitis B virus/HBV protein X. (Microbial infection) Interacts with HTLV-1 protein Tax. Post-translationally, stimulated by phosphorylation. Phosphorylation of both Ser-119 and Ser-128 in the SCN regulates the activity of CREB and participates in circadian rhythm generation. Phosphorylation of Ser-119 allows CREBBP binding. In liver, phosphorylation is induced by fasting or glucagon in a circadian fashion. CREBL2 positively regulates phosphorylation at Ser-119 thereby stimulating CREB1 transcriptional activity. Phosphorylated upon calcium influx by CaMK4 and CaMK2 on Ser-119. CaMK4 is much more potent than CaMK2 in activating CREB. Phosphorylated by CaMK2 on Ser-128. Phosphorylation of Ser-128 blocks CREB-mediated transcription even when Ser-119 is phosphorylated. Phosphorylated by CaMK1. Phosphorylation of Ser-257 by HIPK2 in response to genotoxic stress promotes CREB1 activity, facilitating the recruitment of the coactivator CBP. Phosphorylated at Ser-119 by RPS6KA3, RPS6KA4 and RPS6KA5 in response to mitogenic or stress stimuli. Phosphorylated by TSSK4 on Ser-119. Sumoylated with SUMO1. Sumoylation on Lys-290, but not on Lys-271, is required for nuclear localization of this protein. Sumoylation is enhanced under hypoxia, promoting nuclear localization and stabilization.

It is found in the nucleus. Functionally, phosphorylation-dependent transcription factor that stimulates transcription upon binding to the DNA cAMP response element (CRE), a sequence present in many viral and cellular promoters. Transcription activation is enhanced by the TORC coactivators which act independently of Ser-119 phosphorylation. Involved in different cellular processes including the synchronization of circadian rhythmicity and the differentiation of adipose cells. Regulates the expression of apoptotic and inflammatory response factors in cardiomyocytes in response to ERFE-mediated activation of AKT signaling. In Homo sapiens (Human), this protein is Cyclic AMP-responsive element-binding protein 1 (CREB1).